The sequence spans 1770 residues: Transposon Ty2-GR1 Gag-Pol polyprotein (1770 aa).

3 stretches are compositionally biased toward polar residues: residues 1–11 (MESQQLHQNPH), 19–39 (ASVTSKEVPSNQDPLAVSASN), and 49–60 (KVNSQQETTPGT). Disordered stretches follow at residues 1 to 86 (MESQ…GQYQ) and 360 to 453 (HSEY…LPDH). Residues 295 to 397 (ENNINVSDRL…SSKPRAAKAH (103 aa)) are RNA-binding. The segment covering 369 to 381 (TSPNTTNTKVTTR) has biased composition (low complexity). The segment covering 399-408 (IATSSKFSRV) has biased composition (polar residues). The active-site For protease activity; shared with dimeric partner is Asp457. The segment at 579-636 (NVNKSKSVNKYPYPLIHRMLGHANFRSIQKSLKKNAVTYLKESDIEWSNASTYQCPDC) is integrase-type zinc finger-like. Positions 656–831 (ESYEPFQYLH…AGLDITTILP (176 aa)) constitute an Integrase catalytic domain. Positions 667 and 732 each coordinate Mg(2+). 4 disordered regions span residues 1004–1034 (MGGTVESDTTSPRHSSTFTARNQNRPGSTNE), 1059–1135 (TEEP…KSSK), 1146–1165 (LPLPDLTHKSPTDTSDVSKD), and 1170–1205 (HSRQTNSSLGGMDDSNVLTTTKSKKRSLEDNETEIE). Composition is skewed to polar residues over residues 1009 to 1034 (ESDTTSPRHSSTFTARNQNRPGSTNE) and 1065 to 1082 (QRNSDTNIKYRTTNSTPS). The span at 1151-1165 (LTHKSPTDTSDVSKD) shows a compositional bias: basic and acidic residues. A Bipartite nuclear localization signal motif is present at residues 1193 to 1227 (KKRSLEDNETEIEVSRDTWNNKNMRSLEPPRSKKR). Positions 1353 to 1491 (NDYYITQLDI…DILGLEIKYQ (139 aa)) constitute a Reverse transcriptase Ty1/copia-type domain. Positions 1361, 1442, 1443, 1625, 1667, and 1700 each coordinate Mg(2+). In terms of domain architecture, RNase H Ty1/copia-type spans 1625–1767 (DASYGNQPYY…IKTFKLLTNK (143 aa)).

The capsid protein forms a homotrimer, from which the VLPs are assembled. The protease is a homodimer, whose active site consists of two apposed aspartic acid residues. Initially, virus-like particles (VLPs) are composed of the structural unprocessed proteins Gag and Gag-Pol, and also contain the host initiator methionine tRNA (tRNA(i)-Met) which serves as a primer for minus-strand DNA synthesis, and a dimer of genomic Ty RNA. Processing of the polyproteins occurs within the particle and proceeds by an ordered pathway, called maturation. First, the protease (PR) is released by autocatalytic cleavage of the Gag-Pol polyprotein, and this cleavage is a prerequisite for subsequent processing at the remaining sites to release the mature structural and catalytic proteins. Maturation takes place prior to the RT reaction and is required to produce transposition-competent VLPs.

It is found in the cytoplasm. The protein localises to the nucleus. The catalysed reaction is DNA(n) + a 2'-deoxyribonucleoside 5'-triphosphate = DNA(n+1) + diphosphate. It carries out the reaction Endonucleolytic cleavage to 5'-phosphomonoester.. Its function is as follows. Capsid protein (CA) is the structural component of the virus-like particle (VLP), forming the shell that encapsulates the retrotransposons dimeric RNA genome. The particles are assembled from trimer-clustered units and there are holes in the capsid shells that allow for the diffusion of macromolecules. CA also has nucleocapsid-like chaperone activity, promoting primer tRNA(i)-Met annealing to the multipartite primer-binding site (PBS), dimerization of Ty2 RNA and initiation of reverse transcription. The aspartyl protease (PR) mediates the proteolytic cleavages of the Gag and Gag-Pol polyproteins after assembly of the VLP. In terms of biological role, reverse transcriptase/ribonuclease H (RT) is a multifunctional enzyme that catalyzes the conversion of the retro-elements RNA genome into dsDNA within the VLP. The enzyme displays a DNA polymerase activity that can copy either DNA or RNA templates, and a ribonuclease H (RNase H) activity that cleaves the RNA strand of RNA-DNA heteroduplexes during plus-strand synthesis and hydrolyzes RNA primers. The conversion leads to a linear dsDNA copy of the retrotransposon that includes long terminal repeats (LTRs) at both ends. Functionally, integrase (IN) targets the VLP to the nucleus, where a subparticle preintegration complex (PIC) containing at least integrase and the newly synthesized dsDNA copy of the retrotransposon must transit the nuclear membrane. Once in the nucleus, integrase performs the integration of the dsDNA into the host genome. The protein is Transposon Ty2-GR1 Gag-Pol polyprotein (TY2B-GR1) of Saccharomyces cerevisiae (strain ATCC 204508 / S288c) (Baker's yeast).